The primary structure comprises 207 residues: Thiamine-phosphate synthase (207 aa).

Residues 36 to 40 and aspartate 68 each bind 4-amino-2-methyl-5-(diphosphooxymethyl)pyrimidine; that span reads QLRIK. Positions 69 and 88 each coordinate Mg(2+). Serine 106 lines the 4-amino-2-methyl-5-(diphosphooxymethyl)pyrimidine pocket. 132 to 134 serves as a coordination point for 2-[(2R,5Z)-2-carboxy-4-methylthiazol-5(2H)-ylidene]ethyl phosphate; the sequence is TQT. Lysine 135 lines the 4-amino-2-methyl-5-(diphosphooxymethyl)pyrimidine pocket. Residues glycine 162 and 182–183 contribute to the 2-[(2R,5Z)-2-carboxy-4-methylthiazol-5(2H)-ylidene]ethyl phosphate site; that span reads VS.

This sequence belongs to the thiamine-phosphate synthase family. It depends on Mg(2+) as a cofactor.

It catalyses the reaction 2-[(2R,5Z)-2-carboxy-4-methylthiazol-5(2H)-ylidene]ethyl phosphate + 4-amino-2-methyl-5-(diphosphooxymethyl)pyrimidine + 2 H(+) = thiamine phosphate + CO2 + diphosphate. It carries out the reaction 2-(2-carboxy-4-methylthiazol-5-yl)ethyl phosphate + 4-amino-2-methyl-5-(diphosphooxymethyl)pyrimidine + 2 H(+) = thiamine phosphate + CO2 + diphosphate. The enzyme catalyses 4-methyl-5-(2-phosphooxyethyl)-thiazole + 4-amino-2-methyl-5-(diphosphooxymethyl)pyrimidine + H(+) = thiamine phosphate + diphosphate. It participates in cofactor biosynthesis; thiamine diphosphate biosynthesis; thiamine phosphate from 4-amino-2-methyl-5-diphosphomethylpyrimidine and 4-methyl-5-(2-phosphoethyl)-thiazole: step 1/1. Functionally, condenses 4-methyl-5-(beta-hydroxyethyl)thiazole monophosphate (THZ-P) and 2-methyl-4-amino-5-hydroxymethyl pyrimidine pyrophosphate (HMP-PP) to form thiamine monophosphate (TMP). The protein is Thiamine-phosphate synthase of Pyrococcus horikoshii (strain ATCC 700860 / DSM 12428 / JCM 9974 / NBRC 100139 / OT-3).